A 1072-amino-acid chain; its full sequence is DNA-directed RNA polymerase subunit beta (1072 aa).

Belongs to the RNA polymerase beta chain family. In terms of assembly, in plastids the minimal PEP RNA polymerase catalytic core is composed of four subunits: alpha, beta, beta', and beta''. When a (nuclear-encoded) sigma factor is associated with the core the holoenzyme is formed, which can initiate transcription.

It is found in the plastid. The protein resides in the chloroplast. The catalysed reaction is RNA(n) + a ribonucleoside 5'-triphosphate = RNA(n+1) + diphosphate. In terms of biological role, DNA-dependent RNA polymerase catalyzes the transcription of DNA into RNA using the four ribonucleoside triphosphates as substrates. In Lemna minor (Common duckweed), this protein is DNA-directed RNA polymerase subunit beta.